A 94-amino-acid polypeptide reads, in one-letter code: Long neurotoxin LNTX8 (94 aa).

The N-terminal stretch at 1–21 (MKTLLLTLVVVTIMCLDLGYT) is a signal peptide. 5 disulfide bridges follow: Cys-24/Cys-43, Cys-36/Cys-64, Cys-49/Cys-53, Cys-68/Cys-79, and Cys-80/Cys-85.

The protein belongs to the three-finger toxin family. Long-chain subfamily. Type II alpha-neurotoxin sub-subfamily. In terms of tissue distribution, expressed by the venom gland.

It is found in the secreted. Its function is as follows. Binds with high affinity to muscular (alpha-1/CHRNA1) and neuronal (alpha-7/CHRNA7) nicotinic acetylcholine receptor (nAChR) and inhibits acetylcholine from binding to the receptor, thereby impairing neuromuscular and neuronal transmission. In Ophiophagus hannah (King cobra), this protein is Long neurotoxin LNTX8.